We begin with the raw amino-acid sequence, 277 residues long: Transcription factor WRKY19 (277 aa).

The WRKY DNA-binding region spans 100 to 168 (QDTASLDDGL…YLGDHTCGQA (69 aa)).

It belongs to the WRKY group III family.

It localises to the nucleus. May play a role in defense responses. The protein is Transcription factor WRKY19 of Oryza sativa subsp. japonica (Rice).